Consider the following 308-residue polypeptide: Lipoyl synthase (308 aa).

Residues Cys51, Cys56, Cys62, Cys77, Cys81, Cys84, and Ser290 each contribute to the [4Fe-4S] cluster site. One can recognise a Radical SAM core domain in the interval Trp63 to Leu279.

The protein belongs to the radical SAM superfamily. Lipoyl synthase family. It depends on [4Fe-4S] cluster as a cofactor.

The protein localises to the cytoplasm. It carries out the reaction [[Fe-S] cluster scaffold protein carrying a second [4Fe-4S](2+) cluster] + N(6)-octanoyl-L-lysyl-[protein] + 2 oxidized [2Fe-2S]-[ferredoxin] + 2 S-adenosyl-L-methionine + 4 H(+) = [[Fe-S] cluster scaffold protein] + N(6)-[(R)-dihydrolipoyl]-L-lysyl-[protein] + 4 Fe(3+) + 2 hydrogen sulfide + 2 5'-deoxyadenosine + 2 L-methionine + 2 reduced [2Fe-2S]-[ferredoxin]. It participates in protein modification; protein lipoylation via endogenous pathway; protein N(6)-(lipoyl)lysine from octanoyl-[acyl-carrier-protein]: step 2/2. Its function is as follows. Catalyzes the radical-mediated insertion of two sulfur atoms into the C-6 and C-8 positions of the octanoyl moiety bound to the lipoyl domains of lipoate-dependent enzymes, thereby converting the octanoylated domains into lipoylated derivatives. The protein is Lipoyl synthase of Pelagibacter ubique (strain HTCC1062).